Reading from the N-terminus, the 149-residue chain is UPF0306 protein PM1958 (149 aa).

The protein belongs to the UPF0306 family.

This Pasteurella multocida (strain Pm70) protein is UPF0306 protein PM1958.